The chain runs to 734 residues: Diacylglycerol kinase alpha (734 aa).

EF-hand domains follow at residues 109–144 (RPED…MMRM) and 154–189 (ELRP…TVPL). Residues aspartate 122, aspartate 124, asparagine 126, glutamate 133, aspartate 167, aspartate 169, serine 171, serine 173, and glutamate 178 each coordinate Ca(2+). 2 Phorbol-ester/DAG-type zinc fingers span residues 204–252 (QHMW…ALPC) and 268–318 (THVW…GHEC). Positions 358-505 (NLSTSEALRI…MDRWSVEVIP (148 aa)) are necessary and sufficient for the diacylglycerol kinase activity. Residues 371 to 505 (SNTHPLLVFV…MDRWSVEVIP (135 aa)) enclose the DAGKc domain. Lysine 483 is modified (N6-acetyllysine).

It belongs to the eukaryotic diacylglycerol kinase family. Monomer.

It localises to the cytoplasm. The protein localises to the cytosol. The catalysed reaction is a 1,2-diacyl-sn-glycerol + ATP = a 1,2-diacyl-sn-glycero-3-phosphate + ADP + H(+). It carries out the reaction a 1-O-alkyl-sn-glycerol + ATP = a 1-O-alkyl-sn-glycero-3-phosphate + ADP + H(+). It catalyses the reaction 1-O-alkyl-2-acyl-sn-glycerol + ATP = 1-O-alkyl-2-acyl-sn-glycero-3-phosphate + ADP + H(+). The enzyme catalyses 1,2-dihexadecanoyl-sn-glycerol + ATP = 1,2-dihexadecanoyl-sn-glycero-3-phosphate + ADP + H(+). The catalysed reaction is 1-hexadecanoyl-2-(9Z-octadecenoyl)-sn-glycerol + ATP = 1-hexadecanoyl-2-(9Z-octadecenoyl)-sn-glycero-3-phosphate + ADP + H(+). It carries out the reaction 2-(9Z-octadecenoyl)-glycerol + ATP = 2-(9Z-octadecenoyl)-sn-glycero-3-phosphate + ADP + H(+). It catalyses the reaction 1,2-di-(9Z-octadecenoyl)-sn-glycerol + ATP = 1,2-di-(9Z-octadecenoyl)-sn-glycero-3-phosphate + ADP + H(+). The enzyme catalyses 1-octadecanoyl-2-(5Z,8Z,11Z,14Z-eicosatetraenoyl)-sn-glycerol + ATP = 1-octadecanoyl-2-(5Z,8Z,11Z,14Z-eicosatetraenoyl)-sn-glycero-3-phosphate + ADP + H(+). The catalysed reaction is 1,2-didecanoyl-sn-glycerol + ATP = 1,2-didecanoyl-sn-glycero-3-phosphate + ADP + H(+). It carries out the reaction 1-O-hexadecyl-2-acetyl-sn-glycerol + ATP = 1-O-hexadecyl-2-acetyl-sn-glycero-3-phosphate + ADP + H(+). It catalyses the reaction 1-O-hexadecyl-2-(5Z,8Z,11Z,14Z-eicosatetraenoyl)-sn-glycerol + ATP = 1-O-hexadecyl-2-(5Z,8Z,11Z,14Z-eicosatetraenoyl)-sn-glycero-3-phosphate + ADP + H(+). The enzyme catalyses 1-O-hexadecyl-2-(9Z-octadecenoyl)-sn-glycerol + ATP = 1-O-hexadecyl-2-(9Z-octadecenoyl)-sn-glycero-3-phosphate + ADP + H(+). The catalysed reaction is 1-O-hexadecyl-sn-glycerol + ATP = 1-O-hexadecyl-sn-glycero-3-phosphate + ADP + H(+). It functions in the pathway lipid metabolism; glycerolipid metabolism. With respect to regulation, stimulated by calcium and phosphatidylserine. Diacylglycerol kinase that converts diacylglycerol/DAG into phosphatidic acid/phosphatidate/PA and regulates the respective levels of these two bioactive lipids. Thereby, acts as a central switch between the signaling pathways activated by these second messengers with different cellular targets and opposite effects in numerous biological processes. Also plays an important role in the biosynthesis of complex lipids. Can also phosphorylate 1-alkyl-2-acylglycerol in vitro as efficiently as diacylglycerol provided it contains an arachidonoyl group. Also involved in the production of alkyl-lysophosphatidic acid, another bioactive lipid, through the phosphorylation of 1-alkyl-2-acetyl glycerol. This Sus scrofa (Pig) protein is Diacylglycerol kinase alpha (DGKA).